Reading from the N-terminus, the 360-residue chain is MSTSKAITLTLFIATTLLAPCNAAANATTKPLFPAILIFGDSTVDTGNNNYPLPTIFRAEHFPYGMDLPDGKANGRFSNGKLISDIIATKLNIKEFIPPFLQPNLSDQDILTGVCFASAGAGYDDLTSLSTQAIRVSEQPNMFKSYIARLKGIVGDKKAMEIINNAFVVVSAGPNDFILNYYEIPSRRLEYPFISGYQDFILKRLENFVRELYSLGVRNVLVGGLPPMGCLPIHMTAKFRNIFRFCLEHHNKDSVLYNEKLQNLLPQIEASLPGSKFLYADVYNPMMEMIQNPSKYGFKETKRGCCGTGFLETSFMCNVFSPVCQNRSEFLFFDSIHPSEATYNVIGNLLDPLIRGKFQA.

The first 23 residues, Met-1–Ala-23, serve as a signal peptide directing secretion. Ser-42 serves as the catalytic Nucleophile. 2 N-linked (GlcNAc...) asparagine glycosylation sites follow: Asn-104 and Asn-326. Catalysis depends on residues Asp-334 and His-337.

The protein belongs to the 'GDSL' lipolytic enzyme family.

The protein resides in the secreted. This is GDSL esterase/lipase At2g31540 from Arabidopsis thaliana (Mouse-ear cress).